The primary structure comprises 203 residues: Outer-membrane lipoprotein LolB (203 aa).

The signal sequence occupies residues 1–22 (MPVNLNHTLLLCLLVAASLLSG). Residue cysteine 23 is the site of N-palmitoyl cysteine attachment. Cysteine 23 is lipidated: S-diacylglycerol cysteine.

The protein belongs to the LolB family. In terms of assembly, monomer.

Its subcellular location is the cell outer membrane. Its function is as follows. Plays a critical role in the incorporation of lipoproteins in the outer membrane after they are released by the LolA protein. In Shewanella denitrificans (strain OS217 / ATCC BAA-1090 / DSM 15013), this protein is Outer-membrane lipoprotein LolB.